We begin with the raw amino-acid sequence, 66 residues long: Beta-toxin Css6 (66 aa).

Positions 1–66 constitute an LCN-type CS-alpha/beta domain; it reads KEGYLVNSYT…VWPLPNKTCN (66 aa). 4 disulfide bridges follow: cysteine 12–cysteine 65, cysteine 16–cysteine 41, cysteine 25–cysteine 46, and cysteine 29–cysteine 48. Asparagine 66 carries the asparagine amide modification.

This sequence belongs to the long (4 C-C) scorpion toxin superfamily. Sodium channel inhibitor family. Beta subfamily. In terms of tissue distribution, expressed by the venom gland.

It localises to the secreted. Functionally, beta toxins bind voltage-independently at site-4 of sodium channels (Nav) and shift the voltage of activation toward more negative potentials thereby affecting sodium channel activation and promoting spontaneous and repetitive firing. This is Beta-toxin Css6 from Centruroides suffusus (Durango bark scorpion).